A 463-amino-acid polypeptide reads, in one-letter code: Dipeptidyl peptidase 1 (463 aa).

The first 24 residues, 1 to 24, serve as a signal peptide directing secretion; the sequence is MGPWSGSRLVALLLLVYGAGSVRG. 2 N-linked (GlcNAc...) asparagine glycosylation sites follow: Asn-29 and Asn-53. 2 cysteine pairs are disulfide-bonded: Cys-30–Cys-118 and Cys-54–Cys-136. The propeptide occupies 135 to 230; the sequence is ACFTGRKTGN…TAEIQKKILH (96 aa). The N-linked (GlcNAc...) asparagine glycan is linked to Asn-144. Cystine bridges form between Cys-255-Cys-298, Cys-291-Cys-331, and Cys-321-Cys-337. Residue Cys-258 is part of the active site. The N-linked (GlcNAc...) asparagine glycan is linked to Asn-276. Positions 302 and 304 each coordinate chloride. Tyr-347 is a chloride binding site. Catalysis depends on residues His-405 and Asn-427.

It belongs to the peptidase C1 family. Tetramer of heterotrimers consisting of exclusion domain, heavy- and light chains. Chloride serves as cofactor.

The protein localises to the lysosome. It catalyses the reaction Release of an N-terminal dipeptide, Xaa-Yaa-|-Zaa-, except when Xaa is Arg or Lys, or Yaa or Zaa is Pro.. Its function is as follows. Thiol protease. Has dipeptidylpeptidase activity. Active against a broad range of dipeptide substrates composed of both polar and hydrophobic amino acids. Proline cannot occupy the P1 position and arginine cannot occupy the P2 position of the substrate. Can act as both an exopeptidase and endopeptidase. Activates serine proteases such as elastase, cathepsin G and granzymes A and B. The sequence is that of Dipeptidyl peptidase 1 (CTSC) from Bos taurus (Bovine).